The sequence spans 374 residues: Succinyl-diaminopimelate desuccinylase (374 aa).

A Zn(2+)-binding site is contributed by histidine 66. The active site involves aspartate 68. Residue aspartate 99 participates in Zn(2+) binding. The active-site Proton acceptor is the glutamate 133. Glutamate 134, glutamate 162, and histidine 348 together coordinate Zn(2+).

This sequence belongs to the peptidase M20A family. DapE subfamily. Homodimer. The cofactor is Zn(2+). It depends on Co(2+) as a cofactor.

The catalysed reaction is N-succinyl-(2S,6S)-2,6-diaminopimelate + H2O = (2S,6S)-2,6-diaminopimelate + succinate. It functions in the pathway amino-acid biosynthesis; L-lysine biosynthesis via DAP pathway; LL-2,6-diaminopimelate from (S)-tetrahydrodipicolinate (succinylase route): step 3/3. Functionally, catalyzes the hydrolysis of N-succinyl-L,L-diaminopimelic acid (SDAP), forming succinate and LL-2,6-diaminopimelate (DAP), an intermediate involved in the bacterial biosynthesis of lysine and meso-diaminopimelic acid, an essential component of bacterial cell walls. This Coxiella burnetii (strain CbuK_Q154) (Coxiella burnetii (strain Q154)) protein is Succinyl-diaminopimelate desuccinylase.